A 216-amino-acid chain; its full sequence is Ras-related protein RABA1c (216 aa).

20-27 (GDSGVGKS) serves as a coordination point for GTP. Positions 42 to 50 (SKSTIGVEF) match the Effector region motif. Residues 68–72 (DTAGQ), 126–129 (NKSD), and 156–157 (SA) each bind GTP. Residues Cys-213 and Cys-214 are each lipidated (S-geranylgeranyl cysteine).

Belongs to the small GTPase superfamily. Rab family.

Its subcellular location is the cell membrane. In terms of biological role, intracellular vesicle trafficking and protein transport. The sequence is that of Ras-related protein RABA1c (RABA1C) from Arabidopsis thaliana (Mouse-ear cress).